A 138-amino-acid polypeptide reads, in one-letter code: ATP synthase epsilon chain (138 aa).

Belongs to the ATPase epsilon chain family. In terms of assembly, F-type ATPases have 2 components, CF(1) - the catalytic core - and CF(0) - the membrane proton channel. CF(1) has five subunits: alpha(3), beta(3), gamma(1), delta(1), epsilon(1). CF(0) has three main subunits: a, b and c.

It localises to the cell inner membrane. Its function is as follows. Produces ATP from ADP in the presence of a proton gradient across the membrane. The polypeptide is ATP synthase epsilon chain (Bartonella henselae (strain ATCC 49882 / DSM 28221 / CCUG 30454 / Houston 1) (Rochalimaea henselae)).